The following is a 364-amino-acid chain: Fructose-bisphosphate aldolase C (364 aa).

Position 5 is a phosphotyrosine (Tyr-5). Phosphoserine occurs at positions 36, 39, and 45. Residue Arg-56 participates in substrate binding. Position 111 is an N6-acetyllysine (Lys-111). Residue Ser-132 is modified to Phosphoserine. Lys-147 is a binding site for substrate. Catalysis depends on Glu-188, which acts as the Proton acceptor. Residue Lys-230 is the Schiff-base intermediate with dihydroxyacetone-P of the active site.

Belongs to the class I fructose-bisphosphate aldolase family. As to quaternary structure, homotetramer. Interacts with ATP6V1E1.

The catalysed reaction is beta-D-fructose 1,6-bisphosphate = D-glyceraldehyde 3-phosphate + dihydroxyacetone phosphate. The protein operates within carbohydrate degradation; glycolysis; D-glyceraldehyde 3-phosphate and glycerone phosphate from D-glucose: step 4/4. This chain is Fructose-bisphosphate aldolase C (ALDOC), found in Macaca fascicularis (Crab-eating macaque).